The sequence spans 635 residues: 1-deoxy-D-xylulose-5-phosphate synthase (635 aa).

Residues His78 and 119–121 (GHA) each bind thiamine diphosphate. Mg(2+) is bound at residue Asp151. Thiamine diphosphate contacts are provided by residues 152–153 (GA), Asn180, and Tyr291. Asn180 contributes to the Mg(2+) binding site. The tract at residues 305 to 325 (PAFEDRGGTPVTRGSDGRPPY) is disordered. Glu374 contacts thiamine diphosphate.

Belongs to the transketolase family. DXPS subfamily. In terms of assembly, homodimer. Mg(2+) serves as cofactor. Thiamine diphosphate is required as a cofactor.

It carries out the reaction D-glyceraldehyde 3-phosphate + pyruvate + H(+) = 1-deoxy-D-xylulose 5-phosphate + CO2. The protein operates within metabolic intermediate biosynthesis; 1-deoxy-D-xylulose 5-phosphate biosynthesis; 1-deoxy-D-xylulose 5-phosphate from D-glyceraldehyde 3-phosphate and pyruvate: step 1/1. In terms of biological role, catalyzes the acyloin condensation reaction between C atoms 2 and 3 of pyruvate and glyceraldehyde 3-phosphate to yield 1-deoxy-D-xylulose-5-phosphate (DXP). In Rhodopirellula baltica (strain DSM 10527 / NCIMB 13988 / SH1), this protein is 1-deoxy-D-xylulose-5-phosphate synthase.